Consider the following 390-residue polypeptide: Phosphopentomutase (390 aa).

Positions 10, 282, 287, 323, 324, and 335 each coordinate Mn(2+).

It belongs to the phosphopentomutase family. Mn(2+) is required as a cofactor.

Its subcellular location is the cytoplasm. It carries out the reaction 2-deoxy-alpha-D-ribose 1-phosphate = 2-deoxy-D-ribose 5-phosphate. It catalyses the reaction alpha-D-ribose 1-phosphate = D-ribose 5-phosphate. It functions in the pathway carbohydrate degradation; 2-deoxy-D-ribose 1-phosphate degradation; D-glyceraldehyde 3-phosphate and acetaldehyde from 2-deoxy-alpha-D-ribose 1-phosphate: step 1/2. Its function is as follows. Isomerase that catalyzes the conversion of deoxy-ribose 1-phosphate (dRib-1-P) and ribose 1-phosphate (Rib-1-P) to deoxy-ribose 5-phosphate (dRib-5-P) and ribose 5-phosphate (Rib-5-P), respectively. This chain is Phosphopentomutase, found in Lachnoclostridium phytofermentans (strain ATCC 700394 / DSM 18823 / ISDg) (Clostridium phytofermentans).